The primary structure comprises 227 residues: UPF0758 protein lpg2489 (227 aa).

In terms of domain architecture, MPN spans 102 to 225 (RLSNTQQTYA…YSIFAENKWV (124 aa)). Zn(2+)-binding residues include H173, H175, and D186. Residues 173–186 (HNHPSGLSDASQQD) carry the JAMM motif motif.

This sequence belongs to the UPF0758 family.

The protein is UPF0758 protein lpg2489 of Legionella pneumophila subsp. pneumophila (strain Philadelphia 1 / ATCC 33152 / DSM 7513).